Reading from the N-terminus, the 229-residue chain is Probable calcium-binding protein CML22 (229 aa).

4 EF-hand domains span residues 53-88 (EGLR…LKLS), 89-124 (LSDE…IYLL), 145-180 (SIFD…EDYP), and 184-219 (SPSH…WVGL). Ca(2+)-binding residues include Asp66, Asp68, Asn70, Thr72, and Glu77.

Its function is as follows. Potential calcium sensor. The protein is Probable calcium-binding protein CML22 (CML22) of Arabidopsis thaliana (Mouse-ear cress).